The sequence spans 748 residues: Translation factor GUF1 homolog 2, mitochondrial (748 aa).

The N-terminal 29 residues, 1-29 (MRVGCCLLLKPLRQRLCTASISSRHIMRW), are a transit peptide targeting the mitochondrion. Residues 94–276 (SHIRNVAVVA…AIIERVPPPT (183 aa)) form the tr-type G domain. GTP-binding positions include 103-110 (AHVDHGKT), 167-171 (DTPGH), and 221-224 (TKMD).

Belongs to the TRAFAC class translation factor GTPase superfamily. Classic translation factor GTPase family. LepA subfamily.

It localises to the mitochondrion inner membrane. The enzyme catalyses GTP + H2O = GDP + phosphate + H(+). Functionally, promotes mitochondrial protein synthesis. May act as a fidelity factor of the translation reaction, by catalyzing a one-codon backward translocation of tRNAs on improperly translocated ribosomes. Binds to mitochondrial ribosomes in a GTP-dependent manner. The protein is Translation factor GUF1 homolog 2, mitochondrial of Trypanosoma cruzi (strain CL Brener).